Here is a 508-residue protein sequence, read N- to C-terminus: Photosystem II CP47 reaction center protein (508 aa).

6 consecutive transmembrane segments (helical) span residues 21 to 36 (SVHIMHTALVAGWAGS), 101 to 115 (IVFSGLCFLAAIWHW), 140 to 156 (GIHLFLSGVACFGFGAF), 203 to 218 (IAAGTLGILAGLFHLS), 237 to 252 (VLSSSIAAVFFAAFVV), and 457 to 472 (SFALLFFFGHIWHGAR).

The protein belongs to the PsbB/PsbC family. PsbB subfamily. PSII is composed of 1 copy each of membrane proteins PsbA, PsbB, PsbC, PsbD, PsbE, PsbF, PsbH, PsbI, PsbJ, PsbK, PsbL, PsbM, PsbT, PsbX, PsbY, PsbZ, Psb30/Ycf12, at least 3 peripheral proteins of the oxygen-evolving complex and a large number of cofactors. It forms dimeric complexes. The cofactor is Binds multiple chlorophylls. PSII binds additional chlorophylls, carotenoids and specific lipids..

The protein resides in the plastid. It is found in the chloroplast thylakoid membrane. One of the components of the core complex of photosystem II (PSII). It binds chlorophyll and helps catalyze the primary light-induced photochemical processes of PSII. PSII is a light-driven water:plastoquinone oxidoreductase, using light energy to abstract electrons from H(2)O, generating O(2) and a proton gradient subsequently used for ATP formation. This Lemna minor (Common duckweed) protein is Photosystem II CP47 reaction center protein.